We begin with the raw amino-acid sequence, 306 residues long: Phenylcoumaran benzylic ether reductase POP1 (306 aa).

NADP(+)-binding positions include 9 to 15 (GGTGYIG), arginine 34, and lysine 43. The active-site Proton acceptor is lysine 131. Arginine 135 is a binding site for NADP(+).

It belongs to the NmrA-type oxidoreductase family. Isoflavone reductase subfamily.

It carries out the reaction (-)-dehydrodiconiferyl alcohol + NADPH + H(+) = (S)-isodihydrodehydrodiconiferyl alcohol + NADP(+). The enzyme catalyses (+)-dehydrodiconiferyl alcohol + NADPH + H(+) = (R)-isodihydrodehydrodiconiferyl alcohol + NADP(+). The catalysed reaction is (2R,3S)-dihydrodehydrodiconiferyl alcohol + NADPH + H(+) = (S)-tetrahydrodehydrodiconiferyl alcohol + NADP(+). It catalyses the reaction (2S,3R)-dihydrodehydrodiconiferyl alcohol + NADPH + H(+) = (R)-tetrahydrodehydrodiconiferyl alcohol + NADP(+). Its function is as follows. Oxidoreductase involved in lignan biosynthesis. Catalyzes the NADPH-dependent reduction of phenylcoumaran benzylic ethers. Converts dehydrodiconiferyl alcohol (DDC) to isodihydrodehydrodiconiferyl alcohol (IDDDC), and dihydrodehydrodiconiferyl alcohol (DDDC) to tetrahydrodehydrodiconiferyl alcohol (TDDC). In Populus trichocarpa (Western balsam poplar), this protein is Phenylcoumaran benzylic ether reductase POP1.